The primary structure comprises 321 residues: Acetyl-coenzyme A carboxylase carboxyl transferase subunit alpha (321 aa).

The region spanning Arg-39–Gln-293 is the CoA carboxyltransferase C-terminal domain.

The protein belongs to the AccA family. As to quaternary structure, acetyl-CoA carboxylase is a heterohexamer composed of biotin carboxyl carrier protein (AccB), biotin carboxylase (AccC) and two subunits each of ACCase subunit alpha (AccA) and ACCase subunit beta (AccD).

It localises to the cytoplasm. The enzyme catalyses N(6)-carboxybiotinyl-L-lysyl-[protein] + acetyl-CoA = N(6)-biotinyl-L-lysyl-[protein] + malonyl-CoA. The protein operates within lipid metabolism; malonyl-CoA biosynthesis; malonyl-CoA from acetyl-CoA: step 1/1. Its function is as follows. Component of the acetyl coenzyme A carboxylase (ACC) complex. First, biotin carboxylase catalyzes the carboxylation of biotin on its carrier protein (BCCP) and then the CO(2) group is transferred by the carboxyltransferase to acetyl-CoA to form malonyl-CoA. This Bordetella avium (strain 197N) protein is Acetyl-coenzyme A carboxylase carboxyl transferase subunit alpha.